We begin with the raw amino-acid sequence, 442 residues long: GTPase Der (442 aa).

2 consecutive EngA-type G domains span residues 2-167 (RTIA…PIQN) and 175-351 (FKFC…EQAM). GTP-binding positions include 8-15 (GKPNVGKS), 55-59 (DTGGI), 119-122 (NKIE), 181-188 (GRPNVGKS), 228-232 (DTAGI), and 293-296 (NKWD). Residues 352 to 436 (RKIATSLLND…PITLYWQDKN (85 aa)) form the KH-like domain.

The protein belongs to the TRAFAC class TrmE-Era-EngA-EngB-Septin-like GTPase superfamily. EngA (Der) GTPase family. In terms of assembly, associates with the 50S ribosomal subunit.

Functionally, GTPase that plays an essential role in the late steps of ribosome biogenesis. In Ureaplasma parvum serovar 3 (strain ATCC 27815 / 27 / NCTC 11736), this protein is GTPase Der.